A 231-amino-acid polypeptide reads, in one-letter code: tRNA (guanine-N(7)-)-methyltransferase (231 aa).

4 residues coordinate S-adenosyl-L-methionine: Asp57, Glu82, Asp109, and Asp132. Asp132 is a catalytic residue. Substrate contacts are provided by residues Lys136, Asp168, and 205–208 (TKFE). The segment at 194-214 (AFVPPPPPRPQTKFERRGLRK) is disordered.

It belongs to the class I-like SAM-binding methyltransferase superfamily. TrmB family.

The enzyme catalyses guanosine(46) in tRNA + S-adenosyl-L-methionine = N(7)-methylguanosine(46) in tRNA + S-adenosyl-L-homocysteine. It functions in the pathway tRNA modification; N(7)-methylguanine-tRNA biosynthesis. Functionally, catalyzes the formation of N(7)-methylguanine at position 46 (m7G46) in tRNA. This chain is tRNA (guanine-N(7)-)-methyltransferase, found in Halorhodospira halophila (strain DSM 244 / SL1) (Ectothiorhodospira halophila (strain DSM 244 / SL1)).